Here is a 729-residue protein sequence, read N- to C-terminus: 1,4-alpha-glucan branching enzyme GlgB (729 aa).

Catalysis depends on aspartate 405, which acts as the Nucleophile. Glutamate 458 (proton donor) is an active-site residue.

Belongs to the glycosyl hydrolase 13 family. GlgB subfamily. Monomer.

It catalyses the reaction Transfers a segment of a (1-&gt;4)-alpha-D-glucan chain to a primary hydroxy group in a similar glucan chain.. The protein operates within glycan biosynthesis; glycogen biosynthesis. In terms of biological role, catalyzes the formation of the alpha-1,6-glucosidic linkages in glycogen by scission of a 1,4-alpha-linked oligosaccharide from growing alpha-1,4-glucan chains and the subsequent attachment of the oligosaccharide to the alpha-1,6 position. The sequence is that of 1,4-alpha-glucan branching enzyme GlgB from Mannheimia succiniciproducens (strain KCTC 0769BP / MBEL55E).